The chain runs to 126 residues: Small ribosomal subunit protein uS13 (126 aa).

Residues 91–126 (RHRRGLPVRGQRTSTNARTRKGPRRAIAGKKKPGKK) are disordered. Over residues 108-126 (RTRKGPRRAIAGKKKPGKK) the composition is skewed to basic residues.

It belongs to the universal ribosomal protein uS13 family. As to quaternary structure, part of the 30S ribosomal subunit. Forms a loose heterodimer with protein S19. Forms two bridges to the 50S subunit in the 70S ribosome.

Functionally, located at the top of the head of the 30S subunit, it contacts several helices of the 16S rRNA. In the 70S ribosome it contacts the 23S rRNA (bridge B1a) and protein L5 of the 50S subunit (bridge B1b), connecting the 2 subunits; these bridges are implicated in subunit movement. Contacts the tRNAs in the A and P-sites. This chain is Small ribosomal subunit protein uS13, found in Streptomyces coelicolor (strain ATCC BAA-471 / A3(2) / M145).